The following is a 556-amino-acid chain: Adenine deaminase (556 aa).

Belongs to the metallo-dependent hydrolases superfamily. Adenine deaminase family. The cofactor is Mn(2+).

The enzyme catalyses adenine + H2O + H(+) = hypoxanthine + NH4(+). The sequence is that of Adenine deaminase from Archaeoglobus fulgidus (strain ATCC 49558 / DSM 4304 / JCM 9628 / NBRC 100126 / VC-16).